The sequence spans 137 residues: Nucleoside diphosphate kinase (137 aa).

Positions 9, 57, 85, 91, 102, and 112 each coordinate ATP. The active-site Pros-phosphohistidine intermediate is His-115.

Belongs to the NDK family. Homotetramer. Mg(2+) is required as a cofactor.

It localises to the cytoplasm. It carries out the reaction a 2'-deoxyribonucleoside 5'-diphosphate + ATP = a 2'-deoxyribonucleoside 5'-triphosphate + ADP. The enzyme catalyses a ribonucleoside 5'-diphosphate + ATP = a ribonucleoside 5'-triphosphate + ADP. In terms of biological role, major role in the synthesis of nucleoside triphosphates other than ATP. The ATP gamma phosphate is transferred to the NDP beta phosphate via a ping-pong mechanism, using a phosphorylated active-site intermediate. The protein is Nucleoside diphosphate kinase of Campylobacter concisus (strain 13826).